The sequence spans 435 residues: Deoxybrevianamide E synthase (435 aa).

A disordered region spans residues 1–28 (MTAPELRAPAGHPQEPPARSSPAQALSS). Position 96 (Glu96) interacts with brevianamide F. Arg110, Lys195, Tyr197, Lys265, Tyr267, Tyr354, Tyr419, and Tyr423 together coordinate dimethylallyl diphosphate.

It belongs to the tryptophan dimethylallyltransferase family. In terms of assembly, monomer.

The enzyme catalyses brevianamide F + dimethylallyl diphosphate = deoxybrevianamide E + diphosphate. It functions in the pathway alkaloid biosynthesis. Functionally, deoxybrevianamide E synthase; part of the gene cluster that mediates the biosynthesis of notoamide, a fungal indole alkaloid that belongs to a family of natural products containing a characteristic bicyclo[2.2.2]diazaoctane core. The first step of notoamide biosynthesis involves coupling of L-proline and L-tryptophan by the bimodular NRPS notE', to produce cyclo-L-tryptophan-L-proline called brevianamide F. The reverse prenyltransferase notF' then acts as a deoxybrevianamide E synthase and converts brevianamide F to deoxybrevianamide E via reverse prenylation at C-2 of the indole ring leading to the bicyclo[2.2.2]diazaoctane core. Deoxybrevianamide E is further hydroxylated at C-6 of the indole ring, likely catalyzed by the cytochrome P450 monooxygenase notG', to yield 6-hydroxy-deoxybrevianamide E. 6-hydroxy-deoxybrevianamide E is a specific substrate of the prenyltransferase notC' for normal prenylation at C-7 to produce 6-hydroxy-7-prenyl-deoxybrevianamide, also called notoamide S. As the proposed pivotal branching point in notoamide biosynthesis, notoamide S can be diverted to notoamide E through an oxidative pyran ring closure putatively catalyzed by either notH' cytochrome P450 monooxygenase or the notD' FAD-linked oxidoreductase. This step would be followed by an indole 2,3-epoxidation-initiated pinacol-like rearrangement catalyzed by the notB' FAD-dependent monooxygenase leading to the formation of notoamide C and notoamide D. On the other hand notoamide S is converted to notoamide T by notH' (or notD'), a bifunctional oxidase that also functions as the intramolecular Diels-Alderase responsible for generation of (-)-notoamide T. To generate antipodal (+)-notoaminide T, notH (or notD) in Aspergillus strain MF297-2 is expected to catalyze a Diels-Alder reaction leading to the opposite stereochemistry. The remaining oxidoreductase notD' (or notH') likely catalyzes the oxidative pyran ring formation to yield (-)-stephacidin A. The FAD-dependent monooxygenase notI' is highly similar to notB' and is predicted to catalyze a similar conversion from (-)-stephacidin A to (+)-notoamide B via the 2,3-epoxidation of (-)-stephacidin A followed by a pinacol-type rearrangement. Finally, it remains unclear which enzyme could be responsible for the final hydroxylation steps leading to notoamide A and sclerotiamide. In Aspergillus versicolor, this protein is Deoxybrevianamide E synthase.